The following is a 51-amino-acid chain: DNA-directed RNA polymerase subunit Rpo12 (51 aa).

Zn(2+) is bound by residues C14, C29, and C32.

It belongs to the archaeal Rpo12/eukaryotic RPC10 RNA polymerase subunit family. In terms of assembly, part of the RNA polymerase complex. Zn(2+) serves as cofactor.

It localises to the cytoplasm. The enzyme catalyses RNA(n) + a ribonucleoside 5'-triphosphate = RNA(n+1) + diphosphate. In terms of biological role, DNA-dependent RNA polymerase (RNAP) catalyzes the transcription of DNA into RNA using the four ribonucleoside triphosphates as substrates. This is DNA-directed RNA polymerase subunit Rpo12 from Methanopyrus kandleri (strain AV19 / DSM 6324 / JCM 9639 / NBRC 100938).